The sequence spans 145 residues: Large-conductance mechanosensitive channel (145 aa).

The next 3 helical transmembrane spans lie at 10-30, 41-61, and 87-107; these read FALK…GAFA, IMPI…MFLI, and GNFI…FMMV.

The protein belongs to the MscL family. Homopentamer.

It is found in the cell inner membrane. In terms of biological role, channel that opens in response to stretch forces in the membrane lipid bilayer. May participate in the regulation of osmotic pressure changes within the cell. In Psychrobacter arcticus (strain DSM 17307 / VKM B-2377 / 273-4), this protein is Large-conductance mechanosensitive channel.